Here is a 195-residue protein sequence, read N- to C-terminus: Oocyte-secreted protein 3 (195 aa).

Positions 1–21 (MKAFVASGLLLLIFGMWRCSG) are cleaved as a signal peptide. Asn102 is a glycosylation site (N-linked (GlcNAc...) asparagine).

It belongs to the PLAC1 family. Oocyte-specific.

It is found in the secreted. The chain is Oocyte-secreted protein 3 from Mus musculus (Mouse).